A 107-amino-acid chain; its full sequence is Replication initiation control protein YabA (107 aa).

Zn(2+)-binding residues include His81, Cys83, Cys97, and Cys100.

The protein belongs to the YabA family. In terms of assembly, homotetramer. Interacts with both DnaA and DnaN, acting as a bridge between these two proteins. The cofactor is Zn(2+).

Its subcellular location is the cytoplasm. The protein resides in the nucleoid. Its function is as follows. Involved in control of chromosome replication initiation. Inhibits the cooperative binding of DnaA to the oriC region, thus negatively regulating initiation of chromosome replication. Inhibits the ability of DnaA-ATP to form a helix on DNA; does not disassemble preformed DnaA-DNA helices. Decreases the residence time of DnaA on the chromosome at its binding sites (oriC, replication forks and promoter-binding sites). Tethers DnaA to the replication machinery via the DNA polymerase beta sliding clamp subunit (dnaN). Associates with oriC and other DnaA targets on the chromosome in a DnaA-dependent manner. The sequence is that of Replication initiation control protein YabA from Streptococcus pyogenes serotype M1.